Reading from the N-terminus, the 167-residue chain is Protein DLS1 (167 aa).

Position 17 is a phosphoserine (Ser-17).

Component of the ISW2 complex, which at least consists of ISW2, ITC1, DLS1 and DPB4.

Its subcellular location is the nucleus. Its function is as follows. Functions as a component of the ISW2 complex, which acts in remodeling the chromatin by catalyzing an ATP-dependent alteration in the structure of nucleosomal DNA. The ISW2 complex is involved in coordinating transcriptional repression and in inheritance of telomeric silencing. It is involved in repression of MAT a-specific genes, INO1, and early meiotic genes during mitotic growth dependent upon transcription factor UME6 and in a parallel pathway to the RPD3-SIN3 histone deacetylase complex. DLS1 is partially required for the ISW2 complex chromatin remodeling activity and is not required for its interaction with chromatin. In Saccharomyces cerevisiae (strain ATCC 204508 / S288c) (Baker's yeast), this protein is Protein DLS1 (DLS1).